Reading from the N-terminus, the 183-residue chain is MTVLSFTLMVNQFYLTRGFRLIEGKGRMSYIVKAHRLFGYISVGFLLFHPLLEVLPRQFEGSIQPFDAFWKIITTDNSAILLGIAGWAVMLTLAVTSVLRKRLFKNYRKWRTFHGILAVVLITVVGYHVLVLGRHSSLAMKAFYAVLLAGGYVTMIKTYVFDLRREEKWKNRGLKLAEDSSSP.

4 helical membrane passes run 37–59 (LFGY…PRQF), 79–98 (AILL…VTSV), 110–132 (WRTF…VLVL), and 142–161 (AFYA…TYVF).

The protein resides in the cell membrane. This is an uncharacterized protein from Archaeoglobus fulgidus (strain ATCC 49558 / DSM 4304 / JCM 9628 / NBRC 100126 / VC-16).